A 197-amino-acid polypeptide reads, in one-letter code: Elongation factor Ts (197 aa).

An involved in Mg(2+) ion dislocation from EF-Tu region spans residues 81–84 (TDFV).

The protein belongs to the EF-Ts family.

It localises to the cytoplasm. Its function is as follows. Associates with the EF-Tu.GDP complex and induces the exchange of GDP to GTP. It remains bound to the aminoacyl-tRNA.EF-Tu.GTP complex up to the GTP hydrolysis stage on the ribosome. The polypeptide is Elongation factor Ts (Sulfurihydrogenibium sp. (strain YO3AOP1)).